The sequence spans 237 residues: Lycopene beta-cyclase (237 aa).

Helical transmembrane passes span 3–23 (TSYL…LGVV), 38–58 (VGIL…YLIA), 80–100 (EYLF…ALPL), 113–133 (AVLG…LLTV), 137–157 (FYIG…WAVG), 170–192 (AAVL…DGIW), and 213–233 (AFFF…AWVL).

This sequence belongs to the lycopene beta-cyclase family.

The protein resides in the cell membrane. The enzyme catalyses a carotenoid psi-end group = a carotenoid beta-end derivative. It carries out the reaction all-trans-lycopene = gamma-carotene. The catalysed reaction is gamma-carotene = all-trans-beta-carotene. The protein operates within carotenoid biosynthesis; beta-carotene biosynthesis. Catalyzes the cyclization of both ends of lycopene to form beta-carotene, a retinal precursor. Is required for bacteriorhodopsin biogenesis, a light-driven proton pump with a covalently bound retinal cofactor. The polypeptide is Lycopene beta-cyclase (Halobacterium salinarum (strain ATCC 29341 / DSM 671 / R1)).